The chain runs to 701 residues: DNA ligase (701 aa).

Residues 58–62 (DYEYD), 107–108 (SL), and E138 each bind NAD(+). K140 serves as the catalytic N6-AMP-lysine intermediate. The NAD(+) site is built by R161, E199, K323, and K347. The Zn(2+) site is built by C441, C444, C459, and C464. One can recognise a BRCT domain in the interval 621–701 (EKRGKLAGLN…EEFLKMIGQQ (81 aa)).

This sequence belongs to the NAD-dependent DNA ligase family. LigA subfamily. It depends on Mg(2+) as a cofactor. Requires Mn(2+) as cofactor.

It catalyses the reaction NAD(+) + (deoxyribonucleotide)n-3'-hydroxyl + 5'-phospho-(deoxyribonucleotide)m = (deoxyribonucleotide)n+m + AMP + beta-nicotinamide D-nucleotide.. Its function is as follows. DNA ligase that catalyzes the formation of phosphodiester linkages between 5'-phosphoryl and 3'-hydroxyl groups in double-stranded DNA using NAD as a coenzyme and as the energy source for the reaction. It is essential for DNA replication and repair of damaged DNA. The sequence is that of DNA ligase from Sulfurihydrogenibium azorense (strain DSM 15241 / OCM 825 / Az-Fu1).